A 229-amino-acid polypeptide reads, in one-letter code: Capsid protein (229 aa).

The residue at position 1 (methionine 1) is an N-acetylmethionine; by host. Residues 1 to 10 show a composition bias toward gly residues; that stretch reads MAQNGTGGGS. Residues 1-28 are disordered; that stretch reads MAQNGTGGGSRRPRRGRRNNNNNNSTAR. The cysteines at positions 64 and 106 are disulfide-linked.

It belongs to the cucumovirus capsid protein family.

The protein localises to the virion. Functionally, capsid protein. Probably binds RNA and plays a role in packaging. The chain is Capsid protein from Canna (Florist's daisy).